Reading from the N-terminus, the 55-residue chain is Large ribosomal subunit protein bL33 (55 aa).

This sequence belongs to the bacterial ribosomal protein bL33 family.

The polypeptide is Large ribosomal subunit protein bL33 (Sinorhizobium fredii (strain NBRC 101917 / NGR234)).